A 138-amino-acid polypeptide reads, in one-letter code: Transcription antitermination protein NusB (138 aa).

It belongs to the NusB family.

Its function is as follows. Involved in transcription antitermination. Required for transcription of ribosomal RNA (rRNA) genes. Binds specifically to the boxA antiterminator sequence of the ribosomal RNA (rrn) operons. The polypeptide is Transcription antitermination protein NusB (Yersinia enterocolitica serotype O:8 / biotype 1B (strain NCTC 13174 / 8081)).